We begin with the raw amino-acid sequence, 491 residues long: Protein nucleotidyltransferase YdiU (491 aa).

ATP contacts are provided by Gly-88, Gly-90, Arg-91, Lys-111, Asp-123, Gly-124, Arg-174, and Arg-181. The Proton acceptor role is filled by Asp-250. Asn-251 and Asp-260 together coordinate Mg(2+). An ATP-binding site is contributed by Asp-260.

This sequence belongs to the SELO family. The cofactor is Mg(2+). Mn(2+) is required as a cofactor.

It catalyses the reaction L-seryl-[protein] + ATP = 3-O-(5'-adenylyl)-L-seryl-[protein] + diphosphate. The catalysed reaction is L-threonyl-[protein] + ATP = 3-O-(5'-adenylyl)-L-threonyl-[protein] + diphosphate. It carries out the reaction L-tyrosyl-[protein] + ATP = O-(5'-adenylyl)-L-tyrosyl-[protein] + diphosphate. The enzyme catalyses L-histidyl-[protein] + UTP = N(tele)-(5'-uridylyl)-L-histidyl-[protein] + diphosphate. It catalyses the reaction L-seryl-[protein] + UTP = O-(5'-uridylyl)-L-seryl-[protein] + diphosphate. The catalysed reaction is L-tyrosyl-[protein] + UTP = O-(5'-uridylyl)-L-tyrosyl-[protein] + diphosphate. Its function is as follows. Nucleotidyltransferase involved in the post-translational modification of proteins. It can catalyze the addition of adenosine monophosphate (AMP) or uridine monophosphate (UMP) to a protein, resulting in modifications known as AMPylation and UMPylation. The protein is Protein nucleotidyltransferase YdiU of Bradyrhizobium diazoefficiens (strain JCM 10833 / BCRC 13528 / IAM 13628 / NBRC 14792 / USDA 110).